Consider the following 234-residue polypeptide: Leucyl/phenylalanyl-tRNA--protein transferase (234 aa).

Belongs to the L/F-transferase family.

It localises to the cytoplasm. It catalyses the reaction N-terminal L-lysyl-[protein] + L-leucyl-tRNA(Leu) = N-terminal L-leucyl-L-lysyl-[protein] + tRNA(Leu) + H(+). It carries out the reaction N-terminal L-arginyl-[protein] + L-leucyl-tRNA(Leu) = N-terminal L-leucyl-L-arginyl-[protein] + tRNA(Leu) + H(+). The enzyme catalyses L-phenylalanyl-tRNA(Phe) + an N-terminal L-alpha-aminoacyl-[protein] = an N-terminal L-phenylalanyl-L-alpha-aminoacyl-[protein] + tRNA(Phe). In terms of biological role, functions in the N-end rule pathway of protein degradation where it conjugates Leu, Phe and, less efficiently, Met from aminoacyl-tRNAs to the N-termini of proteins containing an N-terminal arginine or lysine. This Pectobacterium atrosepticum (strain SCRI 1043 / ATCC BAA-672) (Erwinia carotovora subsp. atroseptica) protein is Leucyl/phenylalanyl-tRNA--protein transferase.